Here is a 1342-residue protein sequence, read N- to C-terminus: DNA-directed RNA polymerase subunit beta (1342 aa).

Belongs to the RNA polymerase beta chain family. In terms of assembly, the RNAP catalytic core consists of 2 alpha, 1 beta, 1 beta' and 1 omega subunit. When a sigma factor is associated with the core the holoenzyme is formed, which can initiate transcription.

It carries out the reaction RNA(n) + a ribonucleoside 5'-triphosphate = RNA(n+1) + diphosphate. In terms of biological role, DNA-dependent RNA polymerase catalyzes the transcription of DNA into RNA using the four ribonucleoside triphosphates as substrates. The chain is DNA-directed RNA polymerase subunit beta from Edwardsiella ictaluri (strain 93-146).